The primary structure comprises 364 residues: GDP-fucose transporter 1 (364 aa).

A run of 8 helical transmembrane segments spans residues 34 to 56 (FVLR…ISMV), 76 to 98 (VTFY…ATCC), 111 to 130 (LKVA…MITF), 140 to 162 (VAFY…YLLL), 167 to 185 (SFYA…WLGV), 195 to 214 (SWTG…LNAI), 227 to 249 (IWRL…LLAL), and 264 to 286 (AHFW…VTGL). The tract at residues 345–364 (MKKTQEEPHPRENEKSNMEV) is disordered.

The protein belongs to the TPT transporter family. SLC35C subfamily.

The protein localises to the golgi apparatus membrane. It catalyses the reaction GMP(out) + GDP-beta-L-fucose(in) = GMP(in) + GDP-beta-L-fucose(out). Functionally, antiporter specific for GDP-l-fucose and depending on the concomitant reverse transport of GMP. Involved in GDP-fucose import from the cytoplasm into the Golgi lumen. The polypeptide is GDP-fucose transporter 1 (SLC35C1) (Bos taurus (Bovine)).